A 399-amino-acid polypeptide reads, in one-letter code: Tryptophan synthase beta chain (399 aa).

The residue at position 92 (Lys92) is an N6-(pyridoxal phosphate)lysine.

This sequence belongs to the TrpB family. In terms of assembly, tetramer of two alpha and two beta chains. The cofactor is pyridoxal 5'-phosphate.

It carries out the reaction (1S,2R)-1-C-(indol-3-yl)glycerol 3-phosphate + L-serine = D-glyceraldehyde 3-phosphate + L-tryptophan + H2O. It functions in the pathway amino-acid biosynthesis; L-tryptophan biosynthesis; L-tryptophan from chorismate: step 5/5. The beta subunit is responsible for the synthesis of L-tryptophan from indole and L-serine. The polypeptide is Tryptophan synthase beta chain (Legionella pneumophila (strain Corby)).